Consider the following 482-residue polypeptide: MKFIIKLFPEITIKSQSVRLRFIKILTGNIRNVLKPYDETLAVVRHWDNIEVRAKDESKRAAIVAELTRIPGIHHILAVEDRPYTDVHHIFEQTLEMNRERIEGKTFCVRVKRRGKHEFSSQDVERYVGGGLNQHVASAQVQLNRPQVTVNLEIEDERLILVTARYEGIGGYPIGTQEDVLSLISGGFDSGVSSYMLMRRGCRVHYCFFNLGGAAHEIGVRQVAHYLWKRYGSTHRVRFVAINFEPVVGEILEKVDDGQMGVVLKRMMVRAASKIAERYGVQALVTGEALGQVSSQTLTNLRLIDNASDTLILRPLISHDKEHIIKLAREIGTEDFARTMPEYCGVISKSPTVKAVKAKIEHEEQNFDFAILERMVEEATNVDIREIAEKAQEEVAEVETVASFSHNDVILDIRSNDEQEARPLEVEGVVVKSLPFYKLATQFGDLDQSKSWLLYCERGVMSRLQALYLHEQGFKNVKVYRP.

Residues 61-165 (AAIVAELTRI…DERLILVTAR (105 aa)) enclose the THUMP domain. Residues 183–184 (LI), Lys-265, Gly-287, and Gln-296 each bind ATP. Cys-344 and Cys-456 are oxidised to a cystine. One can recognise a Rhodanese domain in the interval 404 to 482 (FSHNDVILDI…GFKNVKVYRP (79 aa)). The Cysteine persulfide intermediate role is filled by Cys-456.

Belongs to the ThiI family.

The protein resides in the cytoplasm. It catalyses the reaction [ThiI sulfur-carrier protein]-S-sulfanyl-L-cysteine + a uridine in tRNA + 2 reduced [2Fe-2S]-[ferredoxin] + ATP + H(+) = [ThiI sulfur-carrier protein]-L-cysteine + a 4-thiouridine in tRNA + 2 oxidized [2Fe-2S]-[ferredoxin] + AMP + diphosphate. The catalysed reaction is [ThiS sulfur-carrier protein]-C-terminal Gly-Gly-AMP + S-sulfanyl-L-cysteinyl-[cysteine desulfurase] + AH2 = [ThiS sulfur-carrier protein]-C-terminal-Gly-aminoethanethioate + L-cysteinyl-[cysteine desulfurase] + A + AMP + 2 H(+). Its pathway is cofactor biosynthesis; thiamine diphosphate biosynthesis. Its function is as follows. Catalyzes the ATP-dependent transfer of a sulfur to tRNA to produce 4-thiouridine in position 8 of tRNAs, which functions as a near-UV photosensor. Also catalyzes the transfer of sulfur to the sulfur carrier protein ThiS, forming ThiS-thiocarboxylate. This is a step in the synthesis of thiazole, in the thiamine biosynthesis pathway. The sulfur is donated as persulfide by IscS. The polypeptide is tRNA sulfurtransferase (Erwinia tasmaniensis (strain DSM 17950 / CFBP 7177 / CIP 109463 / NCPPB 4357 / Et1/99)).